Reading from the N-terminus, the 1265-residue chain is Protein diaphanous homolog 1 (1265 aa).

Residue Met-1 is modified to N-acetylmethionine. Positions 1–12 are enriched in gly residues; it reads MEPSGGGLGPGR. 2 disordered regions span residues 1–42 and 54–83; these read MEPS…FTLK and SMRI…TAQS. Residue Ser-22 is modified to Phosphoserine. Over residues 54 to 65 the composition is skewed to basic and acidic residues; sequence SMRIKKEKEKPN. Positions 67 to 83 are enriched in polar residues; it reads AHRNSSASYGDDPTAQS. The GBD/FH3 domain occupies 84-449; it reads LQDISDDQVL…QIVLHKNGTD (366 aa). Positions 474–568 form a coiled coil; the sequence is VEKSEAKATE…KKEMASLSAV (95 aa). Residues 573-742 form a disordered region; the sequence is SVSSSAAVPQ…PPPPGMGVPP (170 aa). Composition is skewed to pro residues over residues 594 to 628 and 645 to 742; these read IPPP…PPLP and IPPP…GVPP. Positions 625 to 757 constitute an FH1 domain; the sequence is PPLPGGACIS…FGIPAAPVLP (133 aa). Thr-761 is modified (phosphothreonine). The region spanning 762-1164 is the FH2 domain; sequence PKKVYKPEVQ…MRRAKLAKEK (403 aa). N6-acetyllysine occurs at positions 1050 and 1096. At Tyr-1114 the chain carries Phosphotyrosine. Residues 1141–1185 adopt a coiled-coil conformation; sequence AVKENQKRRETEEKMRRAKLAKEKAEKERLEKQQKREQLIDMNAE. Residues 1187–1215 enclose the DAD domain; it reads DETGVMDSLLEALQSGAAFRRKRGPRQVN. Ser-1247 carries the post-translational modification Phosphoserine.

The protein belongs to the formin homology family. Diaphanous subfamily. Homodimer. Interacts with the GTP-bound form of RHOA. Interacts with RHOC, PFY1, MAPRE1, BAIAP2 and APC. Interacts with SCAI. Interacts with DCAF7, via FH2 domain. Interacts with NCDN. Interacts with OSBPL10, OSBPL2, VIM, TUBB and DYN1. Phosphorylation at Thr-761 is stimulated by cAMP and regulates stability, complex formation and mitochondrial movement. Expressed in testis. Present in Sertoli cells (at protein level).

The protein resides in the cell membrane. Its subcellular location is the cell projection. The protein localises to the ruffle membrane. It localises to the cytoplasm. It is found in the cytoskeleton. The protein resides in the microtubule organizing center. Its subcellular location is the centrosome. The protein localises to the spindle. It localises to the nucleus. Actin nucleation and elongation factor required for the assembly of F-actin structures, such as actin cables and stress fibers. Binds to the barbed end of the actin filament and slows down actin polymerization and depolymerization. Required for cytokinesis, and transcriptional activation of the serum response factor. DFR proteins couple Rho and Src tyrosine kinase during signaling and the regulation of actin dynamics. Functions as a scaffold protein for MAPRE1 and APC to stabilize microtubules and promote cell migration. Has neurite outgrowth promoting activity. Acts in a Rho-dependent manner to recruit PFY1 to the membrane. The MEMO1-RHOA-DIAPH1 signaling pathway plays an important role in ERBB2-dependent stabilization of microtubules at the cell cortex. It controls the localization of APC and CLASP2 to the cell membrane, via the regulation of GSK3B activity. In turn, membrane-bound APC allows the localization of the MACF1 to the cell membrane, which is required for microtubule capture and stabilization. Plays a role in the regulation of cell morphology and cytoskeletal organization. Required in the control of cell shape. Also acts as an actin nucleation and elongation factor in the nucleus by promoting nuclear actin polymerization inside the nucleus to drive serum-dependent SRF-MRTFA activity. The protein is Protein diaphanous homolog 1 of Rattus norvegicus (Rat).